A 357-amino-acid chain; its full sequence is Glycerol-3-phosphate dehydrogenase [NAD(P)+] (357 aa).

Residues Ser-30, Phe-31, Arg-51, and Lys-124 each contribute to the NADPH site. Residues Lys-124 and Gly-152 each contribute to the sn-glycerol 3-phosphate site. Residue Ala-156 coordinates NADPH. Lys-207, Asp-260, Ser-270, Arg-271, and Asn-272 together coordinate sn-glycerol 3-phosphate. Residue Lys-207 is the Proton acceptor of the active site. Arg-271 lines the NADPH pocket. Residue Glu-297 participates in NADPH binding.

The protein belongs to the NAD-dependent glycerol-3-phosphate dehydrogenase family.

It localises to the cytoplasm. It carries out the reaction sn-glycerol 3-phosphate + NAD(+) = dihydroxyacetone phosphate + NADH + H(+). The enzyme catalyses sn-glycerol 3-phosphate + NADP(+) = dihydroxyacetone phosphate + NADPH + H(+). Its pathway is membrane lipid metabolism; glycerophospholipid metabolism. Catalyzes the reduction of the glycolytic intermediate dihydroxyacetone phosphate (DHAP) to sn-glycerol 3-phosphate (G3P), the key precursor for phospholipid synthesis. The chain is Glycerol-3-phosphate dehydrogenase [NAD(P)+] from Acinetobacter baumannii (strain SDF).